A 109-amino-acid polypeptide reads, in one-letter code: DNA-binding protein Mpal_0536 (109 aa).

Residues 14–35 (MAQLQSQQMDQQQMDEEKQRAK) are disordered. Residues 16-25 (QLQSQQMDQQ) are compositionally biased toward low complexity.

The protein belongs to the PDCD5 family.

The chain is DNA-binding protein Mpal_0536 from Methanosphaerula palustris (strain ATCC BAA-1556 / DSM 19958 / E1-9c).